The primary structure comprises 314 residues: Acetaldehyde dehydrogenase 4 (314 aa).

15-18 (SGNI) serves as a coordination point for NAD(+). Catalysis depends on cysteine 133, which acts as the Acyl-thioester intermediate. NAD(+)-binding positions include 164–172 (SAGPGTRAN) and asparagine 292.

It belongs to the acetaldehyde dehydrogenase family.

The catalysed reaction is acetaldehyde + NAD(+) + CoA = acetyl-CoA + NADH + H(+). This Burkholderia lata (strain ATCC 17760 / DSM 23089 / LMG 22485 / NCIMB 9086 / R18194 / 383) protein is Acetaldehyde dehydrogenase 4.